The chain runs to 432 residues: Adenylosuccinate synthetase (432 aa).

Residues 13–19 (GDEGKGK) and 41–43 (GHT) each bind GTP. The active-site Proton acceptor is the Asp14. The Mg(2+) site is built by Asp14 and Gly41. Residues 14 to 17 (DEGK), 39 to 42 (NAGH), Thr130, Arg144, Gln225, Thr240, and Arg304 each bind IMP. His42 acts as the Proton donor in catalysis. 300-306 (STTGRPR) is a substrate binding site. GTP-binding positions include Arg306, 332-334 (KLD), and 416-418 (STG).

This sequence belongs to the adenylosuccinate synthetase family. Homodimer. The cofactor is Mg(2+).

The protein resides in the cytoplasm. It catalyses the reaction IMP + L-aspartate + GTP = N(6)-(1,2-dicarboxyethyl)-AMP + GDP + phosphate + 2 H(+). The protein operates within purine metabolism; AMP biosynthesis via de novo pathway; AMP from IMP: step 1/2. Functionally, plays an important role in the de novo pathway of purine nucleotide biosynthesis. Catalyzes the first committed step in the biosynthesis of AMP from IMP. The polypeptide is Adenylosuccinate synthetase (Nitrosomonas eutropha (strain DSM 101675 / C91 / Nm57)).